The sequence spans 246 residues: Phosphomannomutase (246 aa).

Residue D13 is the Nucleophile of the active site. Residues D13 and D15 each contribute to the Mg(2+) site. The Proton donor/acceptor role is filled by D15. Alpha-D-mannose 1-phosphate contacts are provided by R22, R124, R135, R142, S180, and D182. Mg(2+) contacts are provided by D208, Y220, and T225.

The protein belongs to the eukaryotic PMM family. In terms of assembly, homodimer. Requires Mg(2+) as cofactor. Expressed in roots, stems, leaves, flowers and immature fruits.

The protein localises to the cytoplasm. The enzyme catalyses alpha-D-mannose 1-phosphate = D-mannose 6-phosphate. Its pathway is nucleotide-sugar biosynthesis; GDP-alpha-D-mannose biosynthesis; alpha-D-mannose 1-phosphate from D-fructose 6-phosphate: step 2/2. Functionally, catalyzes the interconversion of mannose-6-phosphate to mannose-1-phosphate, the precursor for the synthesis of GDP-mannose. GDP-mannose is an essential sugar nucleotide for the synthesis of D-mannose-containing cell wall polysaccharides (galactomannans and glucomannans), glycolipids, glycoproteins and the antioxidant L-ascorbate. Can complement the yeast temperature-sensitive mutant sec53-6. The polypeptide is Phosphomannomutase (Arabidopsis thaliana (Mouse-ear cress)).